We begin with the raw amino-acid sequence, 65 residues long: UPF0434 protein VFMJ11_A0475 (65 aa).

It belongs to the UPF0434 family.

This chain is UPF0434 protein VFMJ11_A0475, found in Aliivibrio fischeri (strain MJ11) (Vibrio fischeri).